A 172-amino-acid chain; its full sequence is RNA pyrophosphohydrolase (172 aa).

In terms of domain architecture, Nudix hydrolase spans 6–149 (GFRANVGIII…KRDVYRKVMK (144 aa)). A Nudix box motif is present at residues 38–59 (GGVDEGETPEEAMFRELYEEVG).

This sequence belongs to the Nudix hydrolase family. RppH subfamily. A divalent metal cation is required as a cofactor.

Its function is as follows. Accelerates the degradation of transcripts by removing pyrophosphate from the 5'-end of triphosphorylated RNA, leading to a more labile monophosphorylated state that can stimulate subsequent ribonuclease cleavage. In Shewanella sediminis (strain HAW-EB3), this protein is RNA pyrophosphohydrolase.